The primary structure comprises 100 residues: Putative protein adenylyltransferase MJ1379 (100 aa).

The short motif at 31–45 is the GSX(10)DXD motif element; that stretch reads GSYARGEQTEESDID. The Mg(2+) site is built by aspartate 43, aspartate 45, and aspartate 77.

This sequence belongs to the MntA antitoxin family. In terms of assembly, probably forms a complex with cognate toxin MJ1380. It depends on Mg(2+) as a cofactor.

The catalysed reaction is L-tyrosyl-[protein] + ATP = O-(5'-adenylyl)-L-tyrosyl-[protein] + diphosphate. It catalyses the reaction O-(5'-adenylyl)-L-tyrosyl-[protein] + ATP = O-[5'-(adenylyl-(5'-&gt;3')-adenylyl)]-L-tyrosyl-[protein] + diphosphate. Probable antitoxin component of a putative type VII toxin-antitoxin (TA) system. Neutralizes cognate toxic MJ1380 by di-AMPylation. The polypeptide is Putative protein adenylyltransferase MJ1379 (Methanocaldococcus jannaschii (strain ATCC 43067 / DSM 2661 / JAL-1 / JCM 10045 / NBRC 100440) (Methanococcus jannaschii)).